Here is a 208-residue protein sequence, read N- to C-terminus: Mediator of RNA polymerase II transcription subunit 18 (208 aa).

Position 66 is a phosphoserine (Ser66).

The protein belongs to the Mediator complex subunit 18 family. Component of the Mediator complex, which is composed of MED1, MED4, MED6, MED7, MED8, MED9, MED10, MED11, MED12, MED13, MED13L, MED14, MED15, MED16, MED17, MED18, MED19, MED20, MED21, MED22, MED23, MED24, MED25, MED26, MED27, MED29, MED30, MED31, CCNC, CDK8 and CDC2L6/CDK11. The MED12, MED13, CCNC and CDK8 subunits form a distinct module termed the CDK8 module. Mediator containing the CDK8 module is less active than Mediator lacking this module in supporting transcriptional activation. Individual preparations of the Mediator complex lacking one or more distinct subunits have been variously termed ARC, CRSP, DRIP, PC2, SMCC and TRAP.

It is found in the nucleus. In terms of biological role, component of the Mediator complex, a coactivator involved in the regulated transcription of nearly all RNA polymerase II-dependent genes. Mediator functions as a bridge to convey information from gene-specific regulatory proteins to the basal RNA polymerase II transcription machinery. Mediator is recruited to promoters by direct interactions with regulatory proteins and serves as a scaffold for the assembly of a functional preinitiation complex with RNA polymerase II and the general transcription factors. The chain is Mediator of RNA polymerase II transcription subunit 18 (MED18) from Bos taurus (Bovine).